Reading from the N-terminus, the 186-residue chain is Fucolectin-6 (186 aa).

An N-terminal signal peptide occupies residues 1–32 (MKTCNLTDRMKVKMIMLLFQILAISTLQSVSA). An F5/8 type C-like region spans residues 40-186 (QENVAVRGKA…VEVNAMLPAN (147 aa)). Residues asparagine 67, aspartate 70, asparagine 72, and serine 81 each coordinate Ca(2+). 3 cysteine pairs are disulfide-bonded: cysteine 82-cysteine 175, cysteine 114-cysteine 115, and cysteine 137-cysteine 153. The alpha-L-fucose site is built by histidine 84 and arginine 111. The short motif at 111-113 (RGD) is the Cell attachment site element. Arginine 118 lines the alpha-L-fucose pocket. Ca(2+) contacts are provided by cysteine 175 and glutamate 176.

Belongs to the fucolectin family. Homotrimer. In terms of tissue distribution, gill mucous cells.

It is found in the secreted. Acts as a defensive agent. Recognizes blood group fucosylated oligosaccharides including A, B, H and Lewis B-type antigens. Does not recognize Lewis A antigen and has low affinity for monovalent haptens. This chain is Fucolectin-6, found in Anguilla japonica (Japanese eel).